The primary structure comprises 384 residues: Large ribosomal subunit protein uL3m (384 aa).

Disordered stretches follow at residues Asn80–Glu101 and Gln237–Arg262. Over residues Ser240–Thr249 the composition is skewed to polar residues.

Belongs to the universal ribosomal protein uL3 family. Component of the mitochondrial large ribosomal subunit (mt-LSU). Mature N.crassa 74S mitochondrial ribosomes consist of a small (37S) and a large (54S) subunit. The 37S small subunit contains a 16S ribosomal RNA (16S mt-rRNA) and 32 different proteins. The 54S large subunit contains a 23S rRNA (23S mt-rRNA) and 42 different proteins.

The protein resides in the mitochondrion. In terms of biological role, component of the mitochondrial ribosome (mitoribosome), a dedicated translation machinery responsible for the synthesis of mitochondrial genome-encoded proteins, including at least some of the essential transmembrane subunits of the mitochondrial respiratory chain. The mitoribosomes are attached to the mitochondrial inner membrane and translation products are cotranslationally integrated into the membrane. This Neurospora crassa (strain ATCC 24698 / 74-OR23-1A / CBS 708.71 / DSM 1257 / FGSC 987) protein is Large ribosomal subunit protein uL3m (mrpl9).